A 260-amino-acid polypeptide reads, in one-letter code: Thiazole synthase (260 aa).

Lys-100 (schiff-base intermediate with DXP) is an active-site residue. 1-deoxy-D-xylulose 5-phosphate is bound by residues Gly-162, 188 to 189, and 210 to 211; these read AG and NT.

Belongs to the ThiG family. As to quaternary structure, homotetramer. Forms heterodimers with either ThiH or ThiS.

It is found in the cytoplasm. It carries out the reaction [ThiS sulfur-carrier protein]-C-terminal-Gly-aminoethanethioate + 2-iminoacetate + 1-deoxy-D-xylulose 5-phosphate = [ThiS sulfur-carrier protein]-C-terminal Gly-Gly + 2-[(2R,5Z)-2-carboxy-4-methylthiazol-5(2H)-ylidene]ethyl phosphate + 2 H2O + H(+). It functions in the pathway cofactor biosynthesis; thiamine diphosphate biosynthesis. Its function is as follows. Catalyzes the rearrangement of 1-deoxy-D-xylulose 5-phosphate (DXP) to produce the thiazole phosphate moiety of thiamine. Sulfur is provided by the thiocarboxylate moiety of the carrier protein ThiS. In vitro, sulfur can be provided by H(2)S. In Wolinella succinogenes (strain ATCC 29543 / DSM 1740 / CCUG 13145 / JCM 31913 / LMG 7466 / NCTC 11488 / FDC 602W) (Vibrio succinogenes), this protein is Thiazole synthase.